The following is a 339-amino-acid chain: Deubiquitinase and deneddylase Dub2 (339 aa).

A helical membrane pass occupies residues 36–56 (IIIALFLIVISCGLILCAYTF). Residues H203, D220, and C282 contribute to the active site.

It belongs to the peptidase C48 family.

The protein resides in the secreted. Its subcellular location is the host cell. The protein localises to the membrane. In terms of biological role, effector proteins function to alter host cell physiology and promote bacterial survival in host tissues. This protease possesses deubiquitinating and deneddylating activities. The chain is Deubiquitinase and deneddylase Dub2 (cdu2) from Chlamydia trachomatis serovar A (strain ATCC VR-571B / DSM 19440 / HAR-13).